The following is a 206-amino-acid chain: Holliday junction branch migration complex subunit RuvA (206 aa).

The segment at 1-63 is domain I; the sequence is MISSLRGDVI…DDAHTLYAFS (63 aa). The tract at residues 64-142 is domain II; it reads TSEQRETFGI…ALEATSGQAT (79 aa). The tract at residues 143-150 is flexible linker; the sequence is IGDIAATG. Positions 151–206 are domain III; that stretch reads NDTALQSQVVEALVGLGFTEAKAATAVKKILEEQNGTTDPSSVLREALQRLSGQKR.

It belongs to the RuvA family. As to quaternary structure, homotetramer. Forms an RuvA(8)-RuvB(12)-Holliday junction (HJ) complex. HJ DNA is sandwiched between 2 RuvA tetramers; dsDNA enters through RuvA and exits via RuvB. An RuvB hexamer assembles on each DNA strand where it exits the tetramer. Each RuvB hexamer is contacted by two RuvA subunits (via domain III) on 2 adjacent RuvB subunits; this complex drives branch migration. In the full resolvosome a probable DNA-RuvA(4)-RuvB(12)-RuvC(2) complex forms which resolves the HJ.

It is found in the cytoplasm. Functionally, the RuvA-RuvB-RuvC complex processes Holliday junction (HJ) DNA during genetic recombination and DNA repair, while the RuvA-RuvB complex plays an important role in the rescue of blocked DNA replication forks via replication fork reversal (RFR). RuvA specifically binds to HJ cruciform DNA, conferring on it an open structure. The RuvB hexamer acts as an ATP-dependent pump, pulling dsDNA into and through the RuvAB complex. HJ branch migration allows RuvC to scan DNA until it finds its consensus sequence, where it cleaves and resolves the cruciform DNA. This chain is Holliday junction branch migration complex subunit RuvA, found in Corynebacterium urealyticum (strain ATCC 43042 / DSM 7109).